The chain runs to 122 residues: Large ribosomal subunit protein uL14c (122 aa).

Belongs to the universal ribosomal protein uL14 family. In terms of assembly, part of the 50S ribosomal subunit.

It localises to the plastid. It is found in the chloroplast. In terms of biological role, binds to 23S rRNA. The polypeptide is Large ribosomal subunit protein uL14c (Gracilaria tenuistipitata var. liui (Red alga)).